The chain runs to 526 residues: Peptide chain release factor 3 (526 aa).

Residues 9 to 277 (DKRRTFAIIS…GIVEWAPKPQ (269 aa)) form the tr-type G domain. Residues 18–25 (SHPDAGKT), 86–90 (DTPGH), and 140–143 (NKLD) each bind GTP.

It belongs to the TRAFAC class translation factor GTPase superfamily. Classic translation factor GTPase family. PrfC subfamily.

The protein localises to the cytoplasm. Increases the formation of ribosomal termination complexes and stimulates activities of RF-1 and RF-2. It binds guanine nucleotides and has strong preference for UGA stop codons. It may interact directly with the ribosome. The stimulation of RF-1 and RF-2 is significantly reduced by GTP and GDP, but not by GMP. This Shewanella sediminis (strain HAW-EB3) protein is Peptide chain release factor 3.